The following is a 567-amino-acid chain: Malate synthase, glyoxysomal (567 aa).

Residue arginine 182 is the Proton acceptor of the active site. The active-site Proton donor is the aspartate 468. The short motif at 565-567 is the Microbody targeting signal element; that stretch reads SKL.

It belongs to the malate synthase family.

It is found in the glyoxysome. The enzyme catalyses glyoxylate + acetyl-CoA + H2O = (S)-malate + CoA + H(+). It participates in carbohydrate metabolism; glyoxylate cycle; (S)-malate from isocitrate: step 2/2. This Gossypium hirsutum (Upland cotton) protein is Malate synthase, glyoxysomal.